A 280-amino-acid chain; its full sequence is 4-diphosphocytidyl-2-C-methyl-D-erythritol kinase (280 aa).

Lys8 is a catalytic residue. Residue 91-101 (PVAAGLAGGSS) coordinates ATP. The active site involves Asp133.

Belongs to the GHMP kinase family. IspE subfamily.

It catalyses the reaction 4-CDP-2-C-methyl-D-erythritol + ATP = 4-CDP-2-C-methyl-D-erythritol 2-phosphate + ADP + H(+). It participates in isoprenoid biosynthesis; isopentenyl diphosphate biosynthesis via DXP pathway; isopentenyl diphosphate from 1-deoxy-D-xylulose 5-phosphate: step 3/6. Catalyzes the phosphorylation of the position 2 hydroxy group of 4-diphosphocytidyl-2C-methyl-D-erythritol. This is 4-diphosphocytidyl-2-C-methyl-D-erythritol kinase from Clostridium kluyveri (strain NBRC 12016).